The sequence spans 344 residues: DNA-directed RNA polymerase subunit alpha (344 aa).

Residues 1 to 238 form an alpha N-terminal domain (alpha-NTD) region; it reads MKVIKTAPLI…KQLGVFGERP (238 aa). The segment at 254–344 is alpha C-terminal domain (alpha-CTD); it reads AKDLSAKIES…EKLEDKGGND (91 aa).

This sequence belongs to the RNA polymerase alpha chain family. Homodimer. The RNAP catalytic core consists of 2 alpha, 1 beta, 1 beta' and 1 omega subunit. When a sigma factor is associated with the core the holoenzyme is formed, which can initiate transcription.

It carries out the reaction RNA(n) + a ribonucleoside 5'-triphosphate = RNA(n+1) + diphosphate. In terms of biological role, DNA-dependent RNA polymerase catalyzes the transcription of DNA into RNA using the four ribonucleoside triphosphates as substrates. The chain is DNA-directed RNA polymerase subunit alpha from Helicobacter pylori (strain ATCC 700392 / 26695) (Campylobacter pylori).